A 319-amino-acid chain; its full sequence is 4-diphosphocytidyl-2-C-methyl-D-erythritol kinase (319 aa).

Lysine 18 is a catalytic residue. Proline 103–threonine 113 serves as a coordination point for ATP. The active site involves aspartate 145.

The protein belongs to the GHMP kinase family. IspE subfamily.

It catalyses the reaction 4-CDP-2-C-methyl-D-erythritol + ATP = 4-CDP-2-C-methyl-D-erythritol 2-phosphate + ADP + H(+). It functions in the pathway isoprenoid biosynthesis; isopentenyl diphosphate biosynthesis via DXP pathway; isopentenyl diphosphate from 1-deoxy-D-xylulose 5-phosphate: step 3/6. Catalyzes the phosphorylation of the position 2 hydroxy group of 4-diphosphocytidyl-2C-methyl-D-erythritol. The protein is 4-diphosphocytidyl-2-C-methyl-D-erythritol kinase of Prochlorococcus marinus (strain NATL2A).